Here is a 340-residue protein sequence, read N- to C-terminus: uncharacterized protein (340 aa).

The 250-residue stretch at 58 to 307 (AALPFRYTVN…PSYREMLRER (250 aa)) folds into the Radical SAM core domain. Cys72, Cys76, and Cys79 together coordinate [4Fe-4S] cluster. 2 helical membrane passes run 140–160 (YALMPGIIGALAASGTPLSIL) and 243–263 (QLLGQIAAAGATGVTVFGLHL).

Requires [4Fe-4S] cluster as cofactor.

It is found in the cell membrane. This is an uncharacterized protein from Mycobacterium tuberculosis (strain CDC 1551 / Oshkosh).